The following is an 848-amino-acid chain: Trimethylamine-N-oxide reductase 1 (848 aa).

The segment at residues 1–39 (MNNNDLFQASRRRFLAQLGGLTVAGMLGTSLLTPRRATA) is a signal peptide (tat-type signal). Serine 191 is a binding site for Mo-bis(molybdopterin guanine dinucleotide).

This sequence belongs to the prokaryotic molybdopterin-containing oxidoreductase family. The cofactor is Mo-bis(molybdopterin guanine dinucleotide). Predicted to be exported by the Tat system. The position of the signal peptide cleavage has not been experimentally proven.

The protein resides in the periplasm. It catalyses the reaction trimethylamine + 2 Fe(III)-[cytochrome c] + H2O = trimethylamine N-oxide + 2 Fe(II)-[cytochrome c] + 3 H(+). Its function is as follows. Reduces trimethylamine-N-oxide (TMAO) into trimethylamine; an anaerobic reaction coupled to energy-yielding reactions. This chain is Trimethylamine-N-oxide reductase 1 (torA), found in Escherichia coli O6:H1 (strain CFT073 / ATCC 700928 / UPEC).